The sequence spans 460 residues: Protein btn1 (460 aa).

11 consecutive transmembrane segments (helical) span residues 42–62 (VCVA…VILS), 76–96 (VVLL…PYFI), 105–125 (IIIF…SPPY), 135–155 (LAGI…FVGL), 164–184 (LAAW…AYAL), 195–215 (ATLL…FMVL), 287–307 (GLFF…YTIN), 323–343 (FAHF…GVFI), 356–376 (LYLP…QAVF), 378–398 (FIPS…LGGL), and 428–448 (AAGI…LCDW).

This sequence belongs to the battenin family.

The protein resides in the vacuole membrane. Its function is as follows. Involved in vacuolar transport and vacuole pH homeostasis. Also required for cytokinesis. The chain is Protein btn1 (btn1) from Aspergillus fumigatus (strain ATCC MYA-4609 / CBS 101355 / FGSC A1100 / Af293) (Neosartorya fumigata).